The sequence spans 145 residues: Cytochrome c2 (145 aa).

Positions 1-21 (MKFQVKALAAIAAFAALPALA) are cleaved as a signal peptide. Residue Gln22 is modified to Pyrrolidone carboxylic acid. Residues Cys36, Cys39, His40, and Met121 each coordinate heme c.

This sequence belongs to the cytochrome c family. In terms of processing, binds 1 heme c group covalently per subunit.

Its subcellular location is the periplasm. Cytochrome c2 is found mainly in purple, non-sulfur, photosynthetic bacteria where it functions as the electron donor to the oxidized bacteriochlorophyll in the photophosphorylation pathway. However, it may also have a role in the respiratory chain and is found in some non-photosynthetic bacteria. This Cereibacter sphaeroides (strain ATCC 17023 / DSM 158 / JCM 6121 / CCUG 31486 / LMG 2827 / NBRC 12203 / NCIMB 8253 / ATH 2.4.1.) (Rhodobacter sphaeroides) protein is Cytochrome c2 (cycA).